Reading from the N-terminus, the 423-residue chain is Serine--tRNA ligase (423 aa).

229–231 (TAE) is an L-serine binding site. 260–262 (RRE) lines the ATP pocket. Position 283 (E283) interacts with L-serine. 347–350 (EISS) is a binding site for ATP. S383 contributes to the L-serine binding site.

The protein belongs to the class-II aminoacyl-tRNA synthetase family. Type-1 seryl-tRNA synthetase subfamily. In terms of assembly, homodimer. The tRNA molecule binds across the dimer.

It is found in the cytoplasm. It catalyses the reaction tRNA(Ser) + L-serine + ATP = L-seryl-tRNA(Ser) + AMP + diphosphate + H(+). The catalysed reaction is tRNA(Sec) + L-serine + ATP = L-seryl-tRNA(Sec) + AMP + diphosphate + H(+). It functions in the pathway aminoacyl-tRNA biosynthesis; selenocysteinyl-tRNA(Sec) biosynthesis; L-seryl-tRNA(Sec) from L-serine and tRNA(Sec): step 1/1. Catalyzes the attachment of serine to tRNA(Ser). Is also able to aminoacylate tRNA(Sec) with serine, to form the misacylated tRNA L-seryl-tRNA(Sec), which will be further converted into selenocysteinyl-tRNA(Sec). The sequence is that of Serine--tRNA ligase from Trichlorobacter lovleyi (strain ATCC BAA-1151 / DSM 17278 / SZ) (Geobacter lovleyi).